We begin with the raw amino-acid sequence, 422 residues long: Steroid hormone receptor ERR1 (422 aa).

The segment at 1–66 (MSSQVVGIEP…EGAGSGEQGS (66 aa)) is disordered. The segment at 1–76 (MSSQVVGIEP…GKLVLSSLPK (76 aa)) is repressor domain. Lys-14 is covalently cross-linked (Glycyl lysine isopeptide (Lys-Gly) (interchain with G-Cter in SUMO)). Ser-19 and Ser-22 each carry phosphoserine. Residues 76–151 (KRLCLVCGDV…VGMLKEGVRL (76 aa)) constitute a DNA-binding region (nuclear receptor). 2 NR C4-type zinc fingers span residues 79–99 (CLVCGDVASGYHYGVASCEAC) and 115–134 (CPASNECEITKRRRKACQAC). N6-acetyllysine; by PCAF/KAT2B occurs at positions 129, 138, 160, and 162. Lys-189 is covalently cross-linked (Glycyl lysine isopeptide (Lys-Gly) (interchain with G-Cter in SUMO2)). The 229-residue stretch at 192 to 420 (PVNALVSHLL…KLFLEMLEAM (229 aa)) folds into the NR LBD domain. Lys-402 participates in a covalent cross-link: Glycyl lysine isopeptide (Lys-Gly) (interchain with G-Cter in SUMO); alternate. Residue Lys-402 forms a Glycyl lysine isopeptide (Lys-Gly) (interchain with G-Cter in SUMO2); alternate linkage. Positions 402-422 (KLEGKVPMHKLFLEMLEAMMD) are AF-2 domain.

The protein belongs to the nuclear hormone receptor family. NR3 subfamily. In terms of assembly, binds DNA as a monomer or a homodimer. Interacts (via the AF2 domain) with coactivator PPARGC1A (via the L3 motif); the interaction greatly enhances transcriptional activity of genes involved in energy metabolism. Interacts with PIAS4; the interaction enhances sumoylation. Interacts with MAPK15; promotes re-localization of ESRRA to the cytoplasm through a XPO1-dependent mechanism then inhibits ESRRA transcriptional activity. Post-translationally, phosphorylation on Ser-19 enhances sumoylation on Lys-14 increasing repression of transcriptional activity. Sumoylated with SUMO2. Main site is Lys-14 which is enhanced by phosphorylation on Ser-19, cofactor activation, and by interaction with PIAS4. Sumoylation enhances repression of transcriptional activity, but has no effect on subcellular location nor on DNA binding. In terms of processing, reversibly acetylated. Acetylation by PCAF/KAT2 at Lys-129, Lys-138, Lys-160 and Lys-162 and PCAF/KAT2 decreases transcriptional activity probably by inhibiting DNA-binding activity; deacetylation involves SIRT1 and HDAC8 and increases DNA-binding. In terms of tissue distribution, most highly expressed in kidney, heart, and brown adipocytes. Also found in uterus, cervix and vagina.

The protein localises to the nucleus. The protein resides in the cytoplasm. Its function is as follows. Binds to an ERR-alpha response element (ERRE) containing a single consensus half-site, 5'-TNAAGGTCA-3'. Can bind to the medium-chain acyl coenzyme A dehydrogenase (MCAD) response element NRRE-1 and may act as an important regulator of MCAD promoter. Binds to the C1 region of the lactoferrin gene promoter. Requires dimerization and the coactivator, PGC-1A, for full activity. The ERRalpha/PGC1alpha complex is a regulator of energy metabolism. Induces the expression of PERM1 in the skeletal muscle. The protein is Steroid hormone receptor ERR1 (Esrra) of Mus musculus (Mouse).